A 1006-amino-acid chain; its full sequence is Beta-galactosidase (1006 aa).

Positions 1 to 19 are cleaved as a signal peptide; sequence MKLSSACAIALLAAQAAGA. An N-linked (GlcNAc...) asparagine glycan is attached at N156. Residue E200 is the Proton donor of the active site. The active-site Nucleophile is E298. N373, N402, N422, N478, N522, N622, N739, N760, N777, and N805 each carry an N-linked (GlcNAc...) asparagine glycan.

Belongs to the glycosyl hydrolase 35 family.

The catalysed reaction is Hydrolysis of terminal non-reducing beta-D-galactose residues in beta-D-galactosides.. In terms of biological role, cleaves beta-linked terminal galactosyl residues from gangliosides, glycoproteins, and glycosaminoglycans. The sequence is that of Beta-galactosidase (lacA) from Aspergillus niger.